The chain runs to 154 residues: Peptide deformylase (154 aa).

Fe cation is bound by residues Cys90 and His132. Residue Glu133 is part of the active site. His136 is a binding site for Fe cation.

It belongs to the polypeptide deformylase family. The cofactor is Fe(2+).

The catalysed reaction is N-terminal N-formyl-L-methionyl-[peptide] + H2O = N-terminal L-methionyl-[peptide] + formate. Functionally, removes the formyl group from the N-terminal Met of newly synthesized proteins. Requires at least a dipeptide for an efficient rate of reaction. N-terminal L-methionine is a prerequisite for activity but the enzyme has broad specificity at other positions. The polypeptide is Peptide deformylase (Halothermothrix orenii (strain H 168 / OCM 544 / DSM 9562)).